The chain runs to 658 residues: Threonine--tRNA ligase (658 aa).

The TGS domain maps to 1-64 (MSNTVSLQFP…GASGKVEIIT (64 aa)). The interval 246 to 548 (DHRRLGREMD…LIENFAGHMP (303 aa)) is catalytic. Residues cysteine 343, histidine 394, and histidine 525 each coordinate Zn(2+).

This sequence belongs to the class-II aminoacyl-tRNA synthetase family. In terms of assembly, homodimer. It depends on Zn(2+) as a cofactor.

It localises to the cytoplasm. The catalysed reaction is tRNA(Thr) + L-threonine + ATP = L-threonyl-tRNA(Thr) + AMP + diphosphate + H(+). In terms of biological role, catalyzes the attachment of threonine to tRNA(Thr) in a two-step reaction: L-threonine is first activated by ATP to form Thr-AMP and then transferred to the acceptor end of tRNA(Thr). Also edits incorrectly charged L-seryl-tRNA(Thr). The polypeptide is Threonine--tRNA ligase (Brucella melitensis biotype 2 (strain ATCC 23457)).